A 290-amino-acid chain; its full sequence is S-methyl-5'-thioadenosine phosphorylase (290 aa).

Residues serine 11, 53-54 (RH), and 86-87 (SA) each bind phosphate. Residue methionine 184 participates in substrate binding. Position 185 (threonine 185) interacts with phosphate. Position 208-210 (208-210 (DYD)) interacts with substrate.

The protein belongs to the PNP/MTAP phosphorylase family. MTAP subfamily. In terms of assembly, homohexamer. Dimer of a homotrimer.

It carries out the reaction S-methyl-5'-thioadenosine + phosphate = 5-(methylsulfanyl)-alpha-D-ribose 1-phosphate + adenine. It functions in the pathway amino-acid biosynthesis; L-methionine biosynthesis via salvage pathway; S-methyl-5-thio-alpha-D-ribose 1-phosphate from S-methyl-5'-thioadenosine (phosphorylase route): step 1/1. Its function is as follows. Catalyzes the reversible phosphorylation of S-methyl-5'-thioadenosine (MTA) to adenine and 5-methylthioribose-1-phosphate. Involved in the breakdown of MTA, a major by-product of polyamine biosynthesis. Responsible for the first step in the methionine salvage pathway after MTA has been generated from S-adenosylmethionine. Has broad substrate specificity with 6-aminopurine nucleosides as preferred substrates. The sequence is that of S-methyl-5'-thioadenosine phosphorylase from Cereibacter sphaeroides (strain ATCC 17023 / DSM 158 / JCM 6121 / CCUG 31486 / LMG 2827 / NBRC 12203 / NCIMB 8253 / ATH 2.4.1.) (Rhodobacter sphaeroides).